A 239-amino-acid polypeptide reads, in one-letter code: Prolyl hydroxylase EGLN3 (239 aa).

The beta(2)beta(3) 'finger-like' loop stretch occupies residues 62–73; it reads AGPRAGVSKRHL. The interval 88-104 is required for interaction with ADRB2; the sequence is CEAISFLLSLIDRLVLY. The Fe2OG dioxygenase domain occupies 116–214; it reads ERSKAMVACY…RYAMTVWYFD (99 aa). His135, Asp137, and His196 together coordinate Fe cation. Arg205 serves as a coordination point for 2-oxoglutarate.

In terms of assembly, interacts with BCL2 (via its BH4 domain); the interaction disrupts the BAX-BCL4 complex inhibiting the anti-apoptotic activity of BCL2. Interacts with WDR83; the interaction leads to almost complete elimination of HIF-mediated reporter activity. Interacts with ADRB2; the interaction hydroxylates ADRB2 facilitating its ubiquitination by the VHL-E3 ligase complex. Interacts with PAX2; the interaction targets PAX2 for destruction. Interacts with PKM; the interaction hydroxylates PKM in hypoxia. Interacts with LIMD1, WTIP and AJUBA. Fe(2+) serves as cofactor. It depends on L-ascorbate as a cofactor. Post-translationally, ubiquitinated by SIAH1 and/or SIAH2 in response to the unfolded protein response (UPR), leading to its degradation. In terms of tissue distribution, widely expressed at low levels. Expressed at higher levels in adult heart (cardiac myocytes, aortic endothelial cells and coronary artery smooth muscle), lung and placenta, and in fetal spleen, heart and skeletal muscle. Also expressed in pancreas. Localized to pancreatic acini and islet cells.

It localises to the nucleus. It is found in the cytoplasm. The enzyme catalyses L-prolyl-[protein] + 2-oxoglutarate + O2 = trans-4-hydroxy-L-prolyl-[protein] + succinate + CO2. The catalysed reaction is L-prolyl-[hypoxia-inducible factor alpha subunit] + 2-oxoglutarate + O2 = trans-4-hydroxy-L-prolyl-[hypoxia-inducible factor alpha subunit] + succinate + CO2. Its activity is regulated as follows. Activated in cardiovascular cells and Hela cells following exposure to hypoxia. Inhibited by polynitrogen compounds probably by chelation to Fe(2+) ions. Its function is as follows. Prolyl hydroxylase that mediates hydroxylation of proline residues in target proteins, such as PKM, TELO2, ATF4 and HIF1A. Target proteins are preferentially recognized via a LXXLAP motif. Cellular oxygen sensor that catalyzes, under normoxic conditions, the post-translational formation of 4-hydroxyproline in hypoxia-inducible factor (HIF) alpha proteins. Hydroxylates a specific proline found in each of the oxygen-dependent degradation (ODD) domains (N-terminal, NODD, and C-terminal, CODD) of HIF1A. Also hydroxylates HIF2A. Has a preference for the CODD site for both HIF1A and HIF2A. Hydroxylation on the NODD site by EGLN3 appears to require prior hydroxylation on the CODD site. Hydroxylated HIFs are then targeted for proteasomal degradation via the von Hippel-Lindau ubiquitination complex. Under hypoxic conditions, the hydroxylation reaction is attenuated allowing HIFs to escape degradation resulting in their translocation to the nucleus, heterodimerization with HIF1B, and increased expression of hypoxy-inducible genes. ELGN3 is the most important isozyme in limiting physiological activation of HIFs (particularly HIF2A) in hypoxia. Also hydroxylates PKM in hypoxia, limiting glycolysis. Under normoxia, hydroxylates and regulates the stability of ADRB2. Regulator of cardiomyocyte and neuronal apoptosis. In cardiomyocytes, inhibits the anti-apoptotic effect of BCL2 by disrupting the BAX-BCL2 complex. In neurons, has a NGF-induced proapoptotic effect, probably through regulating CASP3 activity. Also essential for hypoxic regulation of neutrophilic inflammation. Plays a crucial role in DNA damage response (DDR) by hydroxylating TELO2, promoting its interaction with ATR which is required for activation of the ATR/CHK1/p53 pathway. Also mediates hydroxylation of ATF4, leading to decreased protein stability of ATF4. The polypeptide is Prolyl hydroxylase EGLN3 (Homo sapiens (Human)).